Here is a 246-residue protein sequence, read N- to C-terminus: Pyridoxine 5'-phosphate synthase (246 aa).

Asn-12 serves as a coordination point for 3-amino-2-oxopropyl phosphate. 14 to 15 (DH) contributes to the 1-deoxy-D-xylulose 5-phosphate binding site. Arg-23 is a binding site for 3-amino-2-oxopropyl phosphate. The Proton acceptor role is filled by His-48. 1-deoxy-D-xylulose 5-phosphate is bound by residues Arg-50 and His-55. The active-site Proton acceptor is Glu-75. Thr-105 serves as a coordination point for 1-deoxy-D-xylulose 5-phosphate. The Proton donor role is filled by His-196. Residues Gly-197 and 218 to 219 (GH) contribute to the 3-amino-2-oxopropyl phosphate site.

The protein belongs to the PNP synthase family. In terms of assembly, homooctamer; tetramer of dimers.

It is found in the cytoplasm. It carries out the reaction 3-amino-2-oxopropyl phosphate + 1-deoxy-D-xylulose 5-phosphate = pyridoxine 5'-phosphate + phosphate + 2 H2O + H(+). Its pathway is cofactor biosynthesis; pyridoxine 5'-phosphate biosynthesis; pyridoxine 5'-phosphate from D-erythrose 4-phosphate: step 5/5. Its function is as follows. Catalyzes the complicated ring closure reaction between the two acyclic compounds 1-deoxy-D-xylulose-5-phosphate (DXP) and 3-amino-2-oxopropyl phosphate (1-amino-acetone-3-phosphate or AAP) to form pyridoxine 5'-phosphate (PNP) and inorganic phosphate. This Pseudomonas putida (strain GB-1) protein is Pyridoxine 5'-phosphate synthase.